The chain runs to 211 residues: GTP-binding protein ypt5 (211 aa).

Position 21 to 28 (21 to 28 (GDSAVGKS)) interacts with GTP. The Effector region motif lies at 43–51 (RESTIGAAF). Residues 70–74 (DTAGQ) and 128–131 (NKLD) contribute to the GTP site. S-geranylgeranyl cysteine attachment occurs at residues C209 and C211. A Cysteine methyl ester modification is found at C211.

Belongs to the small GTPase superfamily. Rab family.

The protein resides in the cell membrane. Protein transport. Probably involved in vesicular traffic. The sequence is that of GTP-binding protein ypt5 (ypt5) from Schizosaccharomyces pombe (strain 972 / ATCC 24843) (Fission yeast).